The following is a 599-amino-acid chain: MKNIRNFSIIAHIDHGKSTLSDRIIQICGGLSDREMEAQVLDSMDLERERGITIKAQSVTLDYKAADGETYHLNFIDTPGHVDFSYEVSRSLAACEGALLVVDAGQGVEAQTLANCYTAMEMDLEVVPVLNKIDLPAADPERVAEEIEDIVGIDATDAVRCSAKTGVGVQDVLERLVRDIPPPEGDPEGPLQALIIDSWFDNYLGVVSLVRIKNGTMRKGDKVKVMSTGQVYNADRLGIFTPKQIDRTKLKCGEVGWLVCAIKDIHGAPVGDTLTLARNPAEKALPGFKKVKPQVYAGLFPVSSDDYENFRDALGKLSLNDASLFYEPESSTALGFGFRCGFLGLLHMEIIQERLEREYDLDLITTAPTVVYEVETTAKEIIYVDSPSKLPPLNNIYELREPIAECHMLLPQAYLGNVITLCVEKRGVQTNMVYHGNQVALTYEIPMAEVVLDFFDRLKSTSRGYASLDYNFKRFQASDMVRVDVLINNERVDALALITHRGNSQSRGRELVEKMKELIPRQQFDIAIQAAIGTHIIARSTVKQLRKNVLAKCYGGDISRKKKLLQKQKEGKKRMKQIGNVELPQEAFLAILHVGKDSK.

The tr-type G domain maps to 2 to 184 (KNIRNFSIIA…RLVRDIPPPE (183 aa)). GTP-binding positions include 14–19 (DHGKST) and 131–134 (NKID).

It belongs to the TRAFAC class translation factor GTPase superfamily. Classic translation factor GTPase family. LepA subfamily.

It is found in the cell inner membrane. It carries out the reaction GTP + H2O = GDP + phosphate + H(+). Functionally, required for accurate and efficient protein synthesis under certain stress conditions. May act as a fidelity factor of the translation reaction, by catalyzing a one-codon backward translocation of tRNAs on improperly translocated ribosomes. Back-translocation proceeds from a post-translocation (POST) complex to a pre-translocation (PRE) complex, thus giving elongation factor G a second chance to translocate the tRNAs correctly. Binds to ribosomes in a GTP-dependent manner. This chain is Elongation factor 4, found in Citrobacter koseri (strain ATCC BAA-895 / CDC 4225-83 / SGSC4696).